Consider the following 293-residue polypeptide: Acetyl-coenzyme A carboxylase carboxyl transferase subunit beta (293 aa).

The CoA carboxyltransferase N-terminal domain maps to leucine 29 to alanine 293. Zn(2+) is bound by residues cysteine 33, cysteine 36, cysteine 52, and cysteine 55. A C4-type zinc finger spans residues cysteine 33–cysteine 55.

This sequence belongs to the AccD/PCCB family. Acetyl-CoA carboxylase is a heterohexamer composed of biotin carboxyl carrier protein (AccB), biotin carboxylase (AccC) and two subunits each of ACCase subunit alpha (AccA) and ACCase subunit beta (AccD). Zn(2+) is required as a cofactor.

It is found in the cytoplasm. The enzyme catalyses N(6)-carboxybiotinyl-L-lysyl-[protein] + acetyl-CoA = N(6)-biotinyl-L-lysyl-[protein] + malonyl-CoA. It functions in the pathway lipid metabolism; malonyl-CoA biosynthesis; malonyl-CoA from acetyl-CoA: step 1/1. Component of the acetyl coenzyme A carboxylase (ACC) complex. Biotin carboxylase (BC) catalyzes the carboxylation of biotin on its carrier protein (BCCP) and then the CO(2) group is transferred by the transcarboxylase to acetyl-CoA to form malonyl-CoA. This Parasynechococcus marenigrum (strain WH8102) protein is Acetyl-coenzyme A carboxylase carboxyl transferase subunit beta.